Here is a 195-residue protein sequence, read N- to C-terminus: Probable prefoldin subunit 3 (195 aa).

Belongs to the prefoldin subunit alpha family. In terms of assembly, heterohexamer of two PFD-alpha type and four PFD-beta type subunits.

Functionally, binds specifically to cytosolic chaperonin (c-CPN) and transfers target proteins to it. Binds to nascent polypeptide chain and promotes folding in an environment in which there are many competing pathways for nonnative proteins. This Dictyostelium discoideum (Social amoeba) protein is Probable prefoldin subunit 3 (pfdn3).